The sequence spans 369 residues: Putative FAD-dependent monooxygenase YetM (369 aa).

An N-terminal signal peptide occupies residues 1–32 (MKHMLIAGGGIGGLSAAISLRKAGFSVTLCEA). Residues glycine 12, 31–32 (EA), valine 126, and aspartate 285 contribute to the FAD site.

FAD serves as cofactor.

The chain is Putative FAD-dependent monooxygenase YetM (yetM) from Bacillus subtilis (strain 168).